The sequence spans 254 residues: Dolichol-phosphate mannosyltransferase subunit 1 (254 aa).

Positions 25, 27, 29, 56, 58, 111, 112, 113, 140, and 227 each coordinate GDP-alpha-D-mannose. Mg(2+) is bound at residue D113. D113 contributes to the Mn(2+) binding site.

The protein belongs to the glycosyltransferase 2 family. In terms of assembly, component of the dolichol-phosphate mannose (DPM) synthase complex composed of dpm1, dpm2 and dpm3. Requires Mg(2+) as cofactor. Mn(2+) is required as a cofactor. The cofactor is Ca(2+).

Its subcellular location is the endoplasmic reticulum. It catalyses the reaction a di-trans,poly-cis-dolichyl phosphate + GDP-alpha-D-mannose = a di-trans,poly-cis-dolichyl beta-D-mannosyl phosphate + GDP. Its pathway is protein modification; protein glycosylation. Its function is as follows. Transfers mannose from GDP-mannose to dolichol monophosphate to form dolichol phosphate mannose (Dol-P-Man) which is the mannosyl donor in pathways leading to N-glycosylation, glycosyl phosphatidylinositol membrane anchoring, and O-mannosylation of proteins; catalytic subunit of the dolichol-phosphate mannose (DPM) synthase complex. The chain is Dolichol-phosphate mannosyltransferase subunit 1 (dpm1) from Dictyostelium discoideum (Social amoeba).